A 178-amino-acid chain; its full sequence is Interleukin-10 (178 aa).

A signal peptide spans 1–18; it reads MPGSALLCCLLLLTGMRI. An N-linked (GlcNAc...) asparagine glycan is attached at Asn29. Disulfide bonds link Cys30–Cys126 and Cys80–Cys132. N-linked (GlcNAc...) asparagine glycosylation occurs at Asn134.

The protein belongs to the IL-10 family. In terms of assembly, homodimer. Interacts with IL10RA and IL10RB.

Its subcellular location is the secreted. In terms of biological role, major immune regulatory cytokine that acts on many cells of the immune system where it has profound anti-inflammatory functions, limiting excessive tissue disruption caused by inflammation. Mechanistically, IL10 binds to its heterotetrameric receptor comprising IL10RA and IL10RB leading to JAK1 and STAT2-mediated phosphorylation of STAT3. In turn, STAT3 translocates to the nucleus where it drives expression of anti-inflammatory mediators. Targets antigen-presenting cells (APCs) such as macrophages and monocytes and inhibits their release of pro-inflammatory cytokines including granulocyte-macrophage colony-stimulating factor /GM-CSF, granulocyte colony-stimulating factor/G-CSF, IL-1 alpha, IL-1 beta, IL-6, IL-8 and TNF-alpha. Also interferes with antigen presentation by reducing the expression of MHC-class II and co-stimulatory molecules, thereby inhibiting their ability to induce T cell activation. In addition, controls the inflammatory response of macrophages by reprogramming essential metabolic pathways including mTOR signaling. This Mus musculus (Mouse) protein is Interleukin-10 (Il10).